The chain runs to 442 residues: Tubulin beta chain (442 aa).

GTP is bound by residues Q11, E67, S136, G140, T141, G142, and N202. E67 serves as a coordination point for Mg(2+).

The protein belongs to the tubulin family. As to quaternary structure, dimer of alpha and beta chains. A typical microtubule is a hollow water-filled tube with an outer diameter of 25 nm and an inner diameter of 15 nM. Alpha-beta heterodimers associate head-to-tail to form protofilaments running lengthwise along the microtubule wall with the beta-tubulin subunit facing the microtubule plus end conferring a structural polarity. Microtubules usually have 13 protofilaments but different protofilament numbers can be found in some organisms and specialized cells. Mg(2+) is required as a cofactor.

It localises to the cytoplasm. The protein localises to the cytoskeleton. Tubulin is the major constituent of microtubules, a cylinder consisting of laterally associated linear protofilaments composed of alpha- and beta-tubulin heterodimers. Microtubules grow by the addition of GTP-tubulin dimers to the microtubule end, where a stabilizing cap forms. Below the cap, tubulin dimers are in GDP-bound state, owing to GTPase activity of alpha-tubulin. The protein is Tubulin beta chain (TUBB) of Euglena gracilis.